Reading from the N-terminus, the 361-residue chain is 3-dehydroquinate synthase (361 aa).

Residues 72–77, 130–131, Lys-142, and Lys-151 each bind NAD(+); these read SGEKEK and TT. Zn(2+) contacts are provided by Glu-184, His-247, and His-264.

This sequence belongs to the sugar phosphate cyclases superfamily. Dehydroquinate synthase family. Requires NAD(+) as cofactor. Co(2+) is required as a cofactor. Zn(2+) serves as cofactor.

Its subcellular location is the cytoplasm. It carries out the reaction 7-phospho-2-dehydro-3-deoxy-D-arabino-heptonate = 3-dehydroquinate + phosphate. Its pathway is metabolic intermediate biosynthesis; chorismate biosynthesis; chorismate from D-erythrose 4-phosphate and phosphoenolpyruvate: step 2/7. Its function is as follows. Catalyzes the conversion of 3-deoxy-D-arabino-heptulosonate 7-phosphate (DAHP) to dehydroquinate (DHQ). This Bacillus cereus (strain ATCC 14579 / DSM 31 / CCUG 7414 / JCM 2152 / NBRC 15305 / NCIMB 9373 / NCTC 2599 / NRRL B-3711) protein is 3-dehydroquinate synthase.